A 338-amino-acid polypeptide reads, in one-letter code: Anthranilate phosphoribosyltransferase (338 aa).

5-phospho-alpha-D-ribose 1-diphosphate is bound by residues Gly-81, Gly-84–Asp-85, Ser-89, Asn-91–Thr-94, Lys-109–Ser-117, and Ala-121. Gly-81 serves as a coordination point for anthranilate. Residue Ser-93 participates in Mg(2+) binding. Residue Asn-112 participates in anthranilate binding. Arg-167 contributes to the anthranilate binding site. Residues Asp-226 and Glu-227 each coordinate Mg(2+).

It belongs to the anthranilate phosphoribosyltransferase family. In terms of assembly, homodimer. Mg(2+) is required as a cofactor.

It carries out the reaction N-(5-phospho-beta-D-ribosyl)anthranilate + diphosphate = 5-phospho-alpha-D-ribose 1-diphosphate + anthranilate. Its pathway is amino-acid biosynthesis; L-tryptophan biosynthesis; L-tryptophan from chorismate: step 2/5. Catalyzes the transfer of the phosphoribosyl group of 5-phosphorylribose-1-pyrophosphate (PRPP) to anthranilate to yield N-(5'-phosphoribosyl)-anthranilate (PRA). This Rhodopseudomonas palustris (strain TIE-1) protein is Anthranilate phosphoribosyltransferase.